The primary structure comprises 264 residues: Thymidylate synthase (264 aa).

DUMP is bound at residue arginine 21. Histidine 51 contacts (6R)-5,10-methylene-5,6,7,8-tetrahydrofolate. 126-127 contacts dUMP; it reads RR. Cysteine 146 serves as the catalytic Nucleophile. DUMP-binding positions include 166 to 169, asparagine 177, and 207 to 209; these read RSAD and HLY. Aspartate 169 is a (6R)-5,10-methylene-5,6,7,8-tetrahydrofolate binding site. Alanine 263 is a binding site for (6R)-5,10-methylene-5,6,7,8-tetrahydrofolate.

Belongs to the thymidylate synthase family. Bacterial-type ThyA subfamily. Homodimer.

It is found in the cytoplasm. The catalysed reaction is dUMP + (6R)-5,10-methylene-5,6,7,8-tetrahydrofolate = 7,8-dihydrofolate + dTMP. The protein operates within pyrimidine metabolism; dTTP biosynthesis. Its function is as follows. Catalyzes the reductive methylation of 2'-deoxyuridine-5'-monophosphate (dUMP) to 2'-deoxythymidine-5'-monophosphate (dTMP) while utilizing 5,10-methylenetetrahydrofolate (mTHF) as the methyl donor and reductant in the reaction, yielding dihydrofolate (DHF) as a by-product. This enzymatic reaction provides an intracellular de novo source of dTMP, an essential precursor for DNA biosynthesis. The polypeptide is Thymidylate synthase (Azotobacter vinelandii (strain DJ / ATCC BAA-1303)).